The chain runs to 957 residues: PE-PGRS family protein PE_PGRS3 (957 aa).

The PE domain occupies 4-94; it reads VIAAPEVIAA…GAYAAAEAAA (91 aa). Residues 893 to 925 show a composition bias toward basic residues; that stretch reads CRRQRRADRQRRQRRQRRQSRGHARCRRHRRAA. The segment at 893–957 is disordered; that stretch reads CRRQRRADRQ…GISCSPQMMP (65 aa).

The protein belongs to the mycobacterial PE family. PGRS subfamily. Post-translationally, a cleavage of the protein removes the N-terminal 120-150 residues, immediately upstream the PGRS domain. The exact position of the cleavage site could not be identified.

It localises to the cell outer membrane. It is found in the secreted. The protein resides in the cell wall. Its subcellular location is the cell surface. Functionally, the arginine-rich C-terminal region protrudes from the mycobacterial membrane and mediates M.tuberculosis entry into host epithelial cells. May serve as a bridge between mycobacteria and host cells by interacting with specific host phospholipids and extracting them from host cells, for their direct integration or as a source of phosphate, during phases of TB pathogenesis when M.tuberculosis is short of phosphate supply. In Mycobacterium tuberculosis (strain ATCC 25618 / H37Rv), this protein is PE-PGRS family protein PE_PGRS3.